The sequence spans 113 residues: U11-theraphotoxin-Hhn1p (113 aa).

Residues 1–21 (MNTVRVTFLLVFVLAVSLGQA) form the signal peptide. Positions 22–74 (DKDENRMEMQEKTEQGKSYLDFAENLLLQKLEELEAKLLEEDSEESRNSRQKR) are excised as a propeptide. Positions 61–83 (EEDSEESRNSRQKRCIGEGVPCD) are disordered. Disulfide bonds link C75–C90, C82–C95, and C89–C110.

Belongs to the neurotoxin 14 (magi-1) family. 01 (HNTX-16) subfamily. Expressed by the venom gland.

It is found in the secreted. Its function is as follows. Probable ion channel inhibitor. In Cyriopagopus hainanus (Chinese bird spider), this protein is U11-theraphotoxin-Hhn1p.